A 292-amino-acid chain; its full sequence is Elongation factor Ts (292 aa).

The involved in Mg(2+) ion dislocation from EF-Tu stretch occupies residues T81–V84.

It belongs to the EF-Ts family.

The protein localises to the cytoplasm. Associates with the EF-Tu.GDP complex and induces the exchange of GDP to GTP. It remains bound to the aminoacyl-tRNA.EF-Tu.GTP complex up to the GTP hydrolysis stage on the ribosome. The polypeptide is Elongation factor Ts (Alkalilimnicola ehrlichii (strain ATCC BAA-1101 / DSM 17681 / MLHE-1)).